A 213-amino-acid polypeptide reads, in one-letter code: Orotate phosphoribosyltransferase (213 aa).

Lys26 contributes to the 5-phospho-alpha-D-ribose 1-diphosphate binding site. 34 to 35 (FF) serves as a coordination point for orotate. 5-phospho-alpha-D-ribose 1-diphosphate-binding positions include 72–73 (YK), Arg99, Lys100, Lys103, His105, and 124–132 (DDVITAGTA). Orotate is bound by residues Thr128 and Arg156.

Belongs to the purine/pyrimidine phosphoribosyltransferase family. PyrE subfamily. In terms of assembly, homodimer. Requires Mg(2+) as cofactor.

It catalyses the reaction orotidine 5'-phosphate + diphosphate = orotate + 5-phospho-alpha-D-ribose 1-diphosphate. The protein operates within pyrimidine metabolism; UMP biosynthesis via de novo pathway; UMP from orotate: step 1/2. Catalyzes the transfer of a ribosyl phosphate group from 5-phosphoribose 1-diphosphate to orotate, leading to the formation of orotidine monophosphate (OMP). This chain is Orotate phosphoribosyltransferase, found in Shigella sonnei (strain Ss046).